The following is a 688-amino-acid chain: Methionine--tRNA ligase (688 aa).

The short motif at 15–25 (PYANGPIHLGH) is the 'HIGH' region element. Cysteine 146, cysteine 149, cysteine 159, and cysteine 162 together coordinate Zn(2+). Positions 332-336 (KMSKS) match the 'KMSKS' region motif. Position 335 (lysine 335) interacts with ATP. Residues 552–576 (AEAPKKADSKKATDTPVDTRPPLES) are disordered. Positions 554–564 (APKKADSKKAT) are enriched in basic and acidic residues. The tRNA-binding domain occupies 587–688 (DFAKIDLRIA…EGAQPGMRVK (102 aa)).

The protein belongs to the class-I aminoacyl-tRNA synthetase family. MetG type 1 subfamily. In terms of assembly, homodimer. Requires Zn(2+) as cofactor.

The protein localises to the cytoplasm. The enzyme catalyses tRNA(Met) + L-methionine + ATP = L-methionyl-tRNA(Met) + AMP + diphosphate. In terms of biological role, is required not only for elongation of protein synthesis but also for the initiation of all mRNA translation through initiator tRNA(fMet) aminoacylation. The sequence is that of Methionine--tRNA ligase from Shewanella woodyi (strain ATCC 51908 / MS32).